Consider the following 1024-residue polypeptide: Beta-galactosidase (1024 aa).

Substrate is bound by residues asparagine 103 and aspartate 202. Aspartate 202 serves as a coordination point for Na(+). Glutamate 417, histidine 419, and glutamate 462 together coordinate Mg(2+). Substrate contacts are provided by residues glutamate 462 and 538–541 (EYAH). The active-site Proton donor is the glutamate 462. The active-site Nucleophile is the glutamate 538. Residue asparagine 598 coordinates Mg(2+). Residues phenylalanine 602 and asparagine 605 each coordinate Na(+). Substrate contacts are provided by asparagine 605 and tryptophan 1000.

It belongs to the glycosyl hydrolase 2 family. Homotetramer. Requires Mg(2+) as cofactor. Na(+) serves as cofactor.

The enzyme catalyses Hydrolysis of terminal non-reducing beta-D-galactose residues in beta-D-galactosides.. This Escherichia coli O6:K15:H31 (strain 536 / UPEC) protein is Beta-galactosidase.